Consider the following 234-residue polypeptide: Probable transcriptional regulatory protein TcrX (234 aa).

Positions 10-124 (TVLVVDDEPV…EVVLRLRALL (115 aa)) constitute a Response regulatory domain. Residue Asp-59 is modified to 4-aspartylphosphate. Positions 135–232 (GAQLVVGDLV…LRGAGYVLKP (98 aa)) form a DNA-binding region, ompR/PhoB-type.

In terms of processing, phosphorylated by TcrY.

It localises to the cytoplasm. Its function is as follows. Member of the two-component regulatory system TcrY/TcrX. The polypeptide is Probable transcriptional regulatory protein TcrX (tcrX) (Mycobacterium tuberculosis (strain ATCC 25618 / H37Rv)).